Reading from the N-terminus, the 65-residue chain is Large ribosomal subunit protein uL29 (65 aa).

Belongs to the universal ribosomal protein uL29 family.

This is Large ribosomal subunit protein uL29 from Methylococcus capsulatus (strain ATCC 33009 / NCIMB 11132 / Bath).